Here is a 465-residue protein sequence, read N- to C-terminus: MESLRIYNTLARDKQVFVPRQPGEVRMYVCGITVYDYCHVGHARMLVVFDLVQRWLRAIGYRVTYVRNITDIDDKIIRRAVENGETIKSLTDRFIGAMHEDETALGIQRPDVEPRATQFIPQMLGMIETLETNGYAYQAADGDVNYSVRKFADYGKLSGKSLDDLRAGERVAANDAKQDPLDFVLWKRAKADEPEGASWASKYGMGRPGWHIECSAMGCSLLGNHFDIHGGGQDLQFPHHENEIAQSEGATGETFVNYWMHNGFVQVDNEKMSKSLGNFFTIREVLERYDAEVVRFFIVRTHYRSPLNYSDVHLDDARASLTRLYTALKDVEPDTLALDWNEPHAQRFAAAMNDDFNTPVAVATLFELAGEVNRTRDASLARQLKQLAGLLGLLGREPRAFLQQASGAAQAGGLAADEIEAQIAARVAAKQAKDYAEADRIRAELLEAGIALEDKPGGSTEWRRV.

Residue cysteine 30 participates in Zn(2+) binding. The short motif at 32-42 (ITVYDYCHVGH) is the 'HIGH' region element. Positions 214, 239, and 243 each coordinate Zn(2+). The 'KMSKS' region signature appears at 271–275 (KMSKS). Lysine 274 is a binding site for ATP.

The protein belongs to the class-I aminoacyl-tRNA synthetase family. Monomer. Zn(2+) serves as cofactor.

It is found in the cytoplasm. It catalyses the reaction tRNA(Cys) + L-cysteine + ATP = L-cysteinyl-tRNA(Cys) + AMP + diphosphate. This is Cysteine--tRNA ligase from Burkholderia cenocepacia (strain HI2424).